A 711-amino-acid polypeptide reads, in one-letter code: MLNPIVRKFQYGQHTVTLETGMMARQATAAVMVSMDDTAVFVTVVGQKKAKPGQDFFPLTVNYQERTYAAGRIPGSFFRREGRPSEGETLIARLIDRPVRPLFPEGFVNEVQVIATVVSVNPQVNPDIVAMIGASAALSLSGIPFNGPIGAARVGYINDQYVLNPTQDELKESKLDLVVAGTEAAVLMVESEAELLSEDTMLGAVVFGHEQQQVVIQAINDLVKEAGKPRWDWQPEAVNDALNARVAALAESRLSDAYRITDKQERYAQVDVIKSETIDQLTAEDDTLDANELGEILHAIEKNVVRSRVLAGEPRIDGREKDMIRGLDVRTGVLPRTHGSALFTRGETQALVTATLGTARDAQVLDELMGERTDSFLFHYNFPPYSVGETGMVGSPKRREIGHGRLAKRGVLAVMPDMDKFPYTVRVVSEITESNGSSSMASVCGASLALMDAGVPIKAAVAGIAMGLVKEGDNYVVLSDILGDEDHLGDMDFKVAGSREGISALQMDIKIEGITKEIMQVALNQAKGARLHILGVMEQAINAPRGDISEFAPRIHTIKISTDKIKDVIGKGGSVIRALTEETGTTIEIEDDGTVKIAATDGEKAKYAIRRIEEITAEIEVGRIYNGKVTRIVDFGAFVAIGGGKEGLVHISQIADKRVEKVTDYLQMGQEVPVKVLEVDRQGRVRLSIKEATEQTQPAAAPEAPTSEQGE.

Residues Asp-486 and Asp-492 each coordinate Mg(2+). Positions 553–612 (PRIHTIKISTDKIKDVIGKGGSVIRALTEETGTTIEIEDDGTVKIAATDGEKAKYAIRRI) constitute a KH domain. The region spanning 622 to 690 (GRIYNGKVTR…RQGRVRLSIK (69 aa)) is the S1 motif domain. The disordered stretch occupies residues 689–711 (IKEATEQTQPAAAPEAPTSEQGE). Low complexity predominate over residues 694-711 (EQTQPAAAPEAPTSEQGE).

It belongs to the polyribonucleotide nucleotidyltransferase family. Component of the RNA degradosome, which is a multiprotein complex involved in RNA processing and mRNA degradation. Mg(2+) serves as cofactor.

The protein localises to the cytoplasm. It catalyses the reaction RNA(n+1) + phosphate = RNA(n) + a ribonucleoside 5'-diphosphate. Its function is as follows. Involved in mRNA degradation. Catalyzes the phosphorolysis of single-stranded polyribonucleotides processively in the 3'- to 5'-direction. This is Polyribonucleotide nucleotidyltransferase from Salmonella arizonae (strain ATCC BAA-731 / CDC346-86 / RSK2980).